Here is a 354-residue protein sequence, read N- to C-terminus: Photosystem II D2 protein (354 aa).

An N-acetylthreonine modification is found at Thr2. Phosphothreonine is present on Thr2. The helical transmembrane segment at Cys42–Thr62 threads the bilayer. His119 is a binding site for chlorophyll a. The helical transmembrane segment at Gly126–Pro142 threads the bilayer. The pheophytin a site is built by Gln131 and Asn144. A helical membrane pass occupies residues Val154 to Ser167. His199 serves as a coordination point for chlorophyll a. Residues Ala209–Asp229 form a helical membrane-spanning segment. A plastoquinone contacts are provided by His216 and Phe263. His216 is a binding site for Fe cation. His270 provides a ligand contact to Fe cation. Residues Gly280–Arg296 form a helical membrane-spanning segment.

This sequence belongs to the reaction center PufL/M/PsbA/D family. PSII is composed of 1 copy each of membrane proteins PsbA, PsbB, PsbC, PsbD, PsbE, PsbF, PsbH, PsbI, PsbJ, PsbK, PsbL, PsbM, PsbT, PsbX, PsbY, PsbZ, Psb30/Ycf12, at least 3 peripheral proteins of the oxygen-evolving complex and a large number of cofactors. It forms dimeric complexes. The cofactor is The D1/D2 heterodimer binds P680, chlorophylls that are the primary electron donor of PSII, and subsequent electron acceptors. It shares a non-heme iron and each subunit binds pheophytin, quinone, additional chlorophylls, carotenoids and lipids. There is also a Cl(-1) ion associated with D1 and D2, which is required for oxygen evolution. The PSII complex binds additional chlorophylls, carotenoids and specific lipids..

The protein resides in the plastid. Its subcellular location is the chloroplast thylakoid membrane. It carries out the reaction 2 a plastoquinone + 4 hnu + 2 H2O = 2 a plastoquinol + O2. In terms of biological role, photosystem II (PSII) is a light-driven water:plastoquinone oxidoreductase that uses light energy to abstract electrons from H(2)O, generating O(2) and a proton gradient subsequently used for ATP formation. It consists of a core antenna complex that captures photons, and an electron transfer chain that converts photonic excitation into a charge separation. The D1/D2 (PsbA/PsbD) reaction center heterodimer binds P680, the primary electron donor of PSII as well as several subsequent electron acceptors. D2 is needed for assembly of a stable PSII complex. This chain is Photosystem II D2 protein, found in Piper cenocladum (Ant piper).